Here is a 223-residue protein sequence, read N- to C-terminus: Adenylate kinase (223 aa).

10–15 (GSGKGT) serves as a coordination point for ATP. The interval 30 to 59 (ESGAIFREHIGGGTELGMKAKGYIDKGELV) is NMP. AMP-binding positions include Ser-31, Arg-36, 57 to 59 (ELV), 84 to 87 (GFPR), and Gln-91. Positions 125–164 (GRRLCANDPNHPNNIFIDAIKPNGDKCRVCGGDLKTRSDD) are LID. Arg-126 serves as a coordination point for ATP. Residues Arg-161 and Arg-173 each coordinate AMP. Position 209 (Gly-209) interacts with ATP.

It belongs to the adenylate kinase family. As to quaternary structure, monomer.

It localises to the cytoplasm. It carries out the reaction AMP + ATP = 2 ADP. It participates in purine metabolism; AMP biosynthesis via salvage pathway; AMP from ADP: step 1/1. In terms of biological role, catalyzes the reversible transfer of the terminal phosphate group between ATP and AMP. Plays an important role in cellular energy homeostasis and in adenine nucleotide metabolism. The polypeptide is Adenylate kinase (Solidesulfovibrio magneticus (strain ATCC 700980 / DSM 13731 / RS-1) (Desulfovibrio magneticus)).